Here is a 452-residue protein sequence, read N- to C-terminus: Serine--tRNA ligase (452 aa).

251 to 253 (TSE) is an L-serine binding site. Residue 282 to 284 (RSE) coordinates ATP. L-serine is bound at residue glutamate 305. 369-372 (EISS) contributes to the ATP binding site. Serine 404 contacts L-serine.

It belongs to the class-II aminoacyl-tRNA synthetase family. Type-1 seryl-tRNA synthetase subfamily. Homodimer. The tRNA molecule binds across the dimer.

It localises to the cytoplasm. It carries out the reaction tRNA(Ser) + L-serine + ATP = L-seryl-tRNA(Ser) + AMP + diphosphate + H(+). The catalysed reaction is tRNA(Sec) + L-serine + ATP = L-seryl-tRNA(Sec) + AMP + diphosphate + H(+). It participates in aminoacyl-tRNA biosynthesis; selenocysteinyl-tRNA(Sec) biosynthesis; L-seryl-tRNA(Sec) from L-serine and tRNA(Sec): step 1/1. Functionally, catalyzes the attachment of serine to tRNA(Ser). Is also able to aminoacylate tRNA(Sec) with serine, to form the misacylated tRNA L-seryl-tRNA(Sec), which will be further converted into selenocysteinyl-tRNA(Sec). The protein is Serine--tRNA ligase of Albidiferax ferrireducens (strain ATCC BAA-621 / DSM 15236 / T118) (Rhodoferax ferrireducens).